The following is a 324-amino-acid chain: MDLAAIYKSLLSLSPELPSDLGETESSTSWASSGPWSLSSSDSSLPEVAARLPGRSTSLVEGRSCGWVPPPPGFAPLAPRPSSDWSPSPTSPTATPTTSSRYKTELCRTFSESGRCRYGAKCQFAHGLGELRQASRHPKYKTELCHKFYLQGRCPYGSRCHFIHNPSEDLAAPGHPHVLRQSISFSGLPSGRRTSPPPASLAGPSVSSWSFSPSSSPPPPPGDLLLSPSAFSAAPGHLCRRDPTPACCPSCRRATPNSVWGPVGGLARSPSAHSLGSDPDEYASSGTSLGGSDSPVFEAGVFGPPQPPAAPRRLPIFNRISVSE.

Positions 1–15 (MDLAAIYKSLLSLSP) are necessary for nuclear export. Residues 1-98 (MDLAAIYKSL…PTSPTATPTT (98 aa)) form a necessary and sufficient for the association with mRNA decay enzymes and mRNA decay activation region. Necessary for localization of ARE-containing mRNAs to processing bodies (PBs) stretches follow at residues 1–172 (MDLA…DLAA) and 98–324 (TSSR…SVSE). Residues 15–46 (PELPSDLGETESSTSWASSGPWSLSSSDSSLP) are compositionally biased toward low complexity. The disordered stretch occupies residues 15-50 (PELPSDLGETESSTSWASSGPWSLSSSDSSLPEVAA). Ser-58 is subject to Phosphoserine; by MAPKAPK2. Ser-64 carries the phosphoserine modification. One copy of the P-P-P-P-G repeat lies at 69–73 (PPPPG). Positions 76-100 (PLAPRPSSDWSPSPTSPTATPTTSS) are disordered. 2 positions are modified to phosphoserine: Ser-86 and Ser-88. Phosphothreonine is present on Thr-90. At Ser-91 the chain carries Phosphoserine. The tract at residues 93–166 (TATPTTSSRY…GSRCHFIHNP (74 aa)) is necessary for nuclear localization. Residues 95-171 (TPTTSSRYKT…FIHNPSEDLA (77 aa)) form a necessary for RNA-binding region. C3H1-type zinc fingers lie at residues 101–129 (RYKT…HGLG) and 139–167 (KYKT…HNPS). The segment at 101-192 (RYKTELCRTF…ISFSGLPSGR (92 aa)) is necessary for interaction with PABPN1. Phosphoserine is present on Ser-167. The interval 172-324 (APGHPHVLRQ…PIFNRISVSE (153 aa)) is necessary for mRNA decay activation. A Phosphoserine; by MAPKAPK2 modification is found at Ser-184. Disordered regions lie at residues 185–227 (FSGL…LLLS) and 270–324 (PSAH…SVSE). Ser-195 carries the post-translational modification Phosphoserine. A P-P-P-P-G repeat occupies 196 to 200 (PPPAS). The span at 204–214 (PSVSSWSFSPS) shows a compositional bias: low complexity. Ser-216 is modified (phosphoserine). The stretch at 218–222 (PPPPG) is one P-P-P-P-G repeat. The residue at position 227 (Ser-227) is a Phosphoserine; by MAPK1; in vitro. A phosphoserine mark is found at Ser-274, Ser-294, and Ser-321. The segment at 310–324 (APRRLPIFNRISVSE) is interaction with CNOT1.

Associates with cytoplasmic CCR4-NOT and PAN2-PAN3 deadenylase complexes to trigger ARE-containing mRNA deadenylation and decay processes. Part of a mRNA decay activation complex at least composed of poly(A)-specific exoribonucleases CNOT6, EXOSC2 and XRN1 and mRNA-decapping enzymes DCP1A and DCP2. Associates with the RNA exosome complex. Interacts (via phosphorylated form) with 14-3-3 proteins; these interactions promote exclusion of ZFP36 from cytoplasmic stress granules in response to arsenite treatment in a MAPKAPK2-dependent manner and does not prevent CCR4-NOT deadenylase complex recruitment or ZFP36-induced ARE-containing mRNA deadenylation and decay processes. Interacts with 14-3-3 proteins; these interactions occur in response to rapamycin in an Akt-dependent manner. Interacts with AGO2 and AGO4. Interacts (via C-terminus) with CNOT1; this interaction occurs in a RNA-independent manner and induces mRNA deadenylation. Interacts (via N-terminus) with CNOT6. Interacts with CNOT6L. Interacts (via C-terminus) with CNOT7; this interaction occurs in a RNA-independent manner, induces mRNA deadenylation and is inhibited in a phosphorylation MAPKAPK2-dependent manner. Interacts (via unphosphorylated form) with CNOT8; this interaction occurs in a RNA-independent manner and is inhibited in a phosphorylation MAPKAPK2-dependent manner. Interacts with DCP1A. Interacts (via N-terminus) with DCP2. Interacts with EDC3. Interacts (via N-terminus) with EXOSC2. Interacts with heat shock 70 kDa proteins. Interacts with KHSRP; this interaction increases upon cytokine-induced treatment. Interacts with MAP3K4; this interaction enhances the association with SH3KBP1/CIN85. Interacts with MAPKAPK2; this interaction occurs upon skeletal muscle satellite cell activation. Interacts with NCL. Interacts with NUP214; this interaction increases upon lipopolysaccharide (LPS) stimulation. Interacts with PABPC1; this interaction occurs in a RNA-dependent manner. Interacts (via hypophosphorylated form) with PABPN1 (via RRM domain and C-terminal arginine-rich region); this interaction occurs in the nucleus in a RNA-independent manner, decreases in presence of single-stranded poly(A) RNA-oligomer and in a p38 MAPK-dependent-manner and inhibits nuclear poly(A) tail synthesis. Interacts with PAN2. Interacts (via C3H1-type zinc finger domains) with PKM. Interacts (via C3H1-type zinc finger domains) with nuclear RNA poly(A) polymerase. Interacts with PPP2CA; this interaction occurs in LPS-stimulated cells and induces ZFP36 dephosphorylation, and hence may promote ARE-containing mRNAs decay. Interacts (via C-terminus) with PRR5L (via C-terminus); this interaction may accelerate ZFP36-mediated mRNA decay during stress. Interacts (via C-terminus) with SFN; this interaction occurs in a phosphorylation-dependent manner. Interacts (via extreme C-terminal region) with SH3KBP1/CIN85 (via SH3 domains); this interaction enhances MAP3K4-induced phosphorylation of ZFP36 at Ser-64 and Ser-91 and does not alter neither ZFP36 binding to ARE-containing transcripts nor TNF-alpha mRNA decay. Interacts with XRN1. Interacts (via C-terminus and Ser-184 phosphorylated form) with YWHAB; this interaction occurs in a p38/MAPKAPK2-dependent manner, increases cytoplasmic localization of ZFP36 and protects ZFP36 from Ser-184 dephosphorylation by serine/threonine phosphatase 2A, and hence may be crucial for stabilizing ARE-containing mRNAs. Interacts (via phosphorylated form) with YWHAE. Interacts (via C-terminus) with YWHAG; this interaction occurs in a phosphorylation-dependent manner. Interacts with YWHAH; this interaction occurs in a phosphorylation-dependent manner. Interacts with YWHAQ; this interaction occurs in a phosphorylation-dependent manner. Interacts with (via C-terminus) YWHAZ; this interaction occurs in a phosphorylation-dependent manner. Does not interact with SH3KBP1. Interacts (via P-P-P-P-G repeats) with GIGYF2; the interaction is direct. Phosphorylated. Phosphorylation at serine and/or threonine residues occurs in a p38 MAPK- and MAPKAPK2-dependent manner. Phosphorylated by MAPKAPK2 at Ser-58 and Ser-184; phosphorylation increases its stability and cytoplasmic localization, promotes binding to 14-3-3 adapter proteins and inhibits the recruitment of cytoplasmic CCR4-NOT and PAN2-PAN3 deadenylase complexes to the mRNA decay machinery, thereby inhibiting ZFP36-induced ARE-containing mRNA deadenylation and decay processes. Phosphorylation by MAPKAPK2 does not impair ARE-containing RNA-binding. Phosphorylated in a MAPKAPK2- and p38 MAPK-dependent manner upon skeletal muscle satellite cell activation; this phosphorylation inhibits ZFP36-mediated mRNA decay activity, and hence stabilizes MYOD1 mRNA. Phosphorylated by MAPK1 upon mitogen stimulation. Phosphorylated at Ser-64 and Ser-91; these phosphorylations increase in a SH3KBP1-dependent manner. Phosphorylated at serine and threonine residues in a pyruvate kinase PKM- and p38 MAPK-dependent manner. Phosphorylation at Ser-58 may participate in the PKM-mediated degradation of ZFP36 in a p38 MAPK-dependent manner. Dephosphorylated by serine/threonine phosphatase 2A at Ser-184. Post-translationally, ubiquitinated; pyruvate kinase (PKM)-dependent ubiquitination leads to proteasomal degradation through a p38 MAPK signaling pathway.

The protein resides in the nucleus. It is found in the cytoplasm. The protein localises to the cytoplasmic granule. Its subcellular location is the P-body. Zinc-finger RNA-binding protein that destabilizes numerous cytoplasmic AU-rich element (ARE)-containing mRNA transcripts by promoting their poly(A) tail removal or deadenylation, and hence provide a mechanism for attenuating protein synthesis. Acts as an 3'-untranslated region (UTR) ARE mRNA-binding adapter protein to communicate signaling events to the mRNA decay machinery. Recruits deadenylase CNOT7 (and probably the CCR4-NOT complex) via association with CNOT1, and hence promotes ARE-mediated mRNA deadenylation. Also functions by recruiting components of the cytoplasmic RNA decay machinery to the bound ARE-containing mRNAs. Self regulates by destabilizing its own mRNA. Binds to 3'-UTR ARE of numerous mRNAs. Also binds to ARE of its own mRNA. Plays a role in anti-inflammatory responses; suppresses tumor necrosis factor (TNF)-alpha production by stimulating ARE-mediated TNF-alpha mRNA decay and several other inflammatory ARE-containing mRNAs in interferon (IFN)- and/or lipopolysaccharide (LPS)-induced macrophages. Also plays a role in the regulation of dendritic cell maturation at the post-transcriptional level, and hence operates as part of a negative feedback loop to limit the inflammatory response. Promotes ARE-mediated mRNA decay of hypoxia-inducible factor HIF1A mRNA during the response of endothelial cells to hypoxia. Positively regulates early adipogenesis of preadipocytes by promoting ARE-mediated mRNA decay of immediate early genes (IEGs). Negatively regulates hematopoietic/erythroid cell differentiation by promoting ARE-mediated mRNA decay of the transcription factor STAT5B mRNA. Plays a role in maintaining skeletal muscle satellite cell quiescence by promoting ARE-mediated mRNA decay of the myogenic determination factor MYOD1 mRNA. Also associates with and regulates the expression of non-ARE-containing target mRNAs at the post-transcriptional level, such as MHC class I mRNAs. Participates in association with argonaute RISC catalytic components in the ARE-mediated mRNA decay mechanism; assists microRNA (miRNA) targeting ARE-containing mRNAs. May also play a role in the regulation of cytoplasmic mRNA decapping; enhances decapping of ARE-containing RNAs, in vitro. Involved in the delivery of target ARE-mRNAs to processing bodies (PBs). In addition to its cytosolic mRNA-decay function, affects nuclear pre-mRNA processing. Negatively regulates nuclear poly(A)-binding protein PABPN1-stimulated polyadenylation activity on ARE-containing pre-mRNA during LPS-stimulated macrophages. Also involved in the regulation of stress granule (SG) and P-body (PB) formation and fusion. Plays a role in the regulation of keratinocyte proliferation, differentiation and apoptosis. Plays a role as a tumor suppressor by inhibiting cell proliferation in breast cancer cells. The polypeptide is mRNA decay activator protein ZFP36 (Bos taurus (Bovine)).